Reading from the N-terminus, the 186-residue chain is Ribonuclease M5 (186 aa).

The region spanning 4-94 (KEIIVVEGRD…AKPKNKRGIG (91 aa)) is the Toprim domain. The Mg(2+) site is built by Glu10, Asp56, and Asp58.

It belongs to the ribonuclease M5 family. As to quaternary structure, requires ribosomal protein L18 (rplR) for catalysis; it can be replaced by 30% dimethylsulfoxide suggesting L18 functions as an rRNA folding chaperone. Requires Mg(2+) as cofactor. It depends on Mn(2+) as a cofactor. The cofactor is Ca(2+).

It is found in the cytoplasm. The enzyme catalyses Endonucleolytic cleavage of RNA, removing 21 and 42 nucleotides, respectively, from the 5'- and 3'-termini of a 5S-rRNA precursor.. Required for correct processing of both the 5' and 3' ends of 5S rRNA precursor. Cleaves both sides of a double-stranded region yielding mature 5S rRNA in one step. Releases 5'-phosphoryl and 3'-hydroxy termini. In Bacillus subtilis (strain 168), this protein is Ribonuclease M5.